The primary structure comprises 59 residues: Small ribosomal subunit protein eS17 (59 aa).

The protein belongs to the eukaryotic ribosomal protein eS17 family.

The protein is Small ribosomal subunit protein eS17 of Halobacterium salinarum (strain ATCC 29341 / DSM 671 / R1).